We begin with the raw amino-acid sequence, 201 residues long: 3-isopropylmalate dehydratase small subunit (201 aa).

The protein belongs to the LeuD family. LeuD type 1 subfamily. As to quaternary structure, heterodimer of LeuC and LeuD.

It catalyses the reaction (2R,3S)-3-isopropylmalate = (2S)-2-isopropylmalate. It functions in the pathway amino-acid biosynthesis; L-leucine biosynthesis; L-leucine from 3-methyl-2-oxobutanoate: step 2/4. Its function is as follows. Catalyzes the isomerization between 2-isopropylmalate and 3-isopropylmalate, via the formation of 2-isopropylmaleate. The polypeptide is 3-isopropylmalate dehydratase small subunit (Salmonella arizonae (strain ATCC BAA-731 / CDC346-86 / RSK2980)).